The sequence spans 139 residues: uncharacterized protein (139 aa).

The protein to E.coli YecT.

This is an uncharacterized protein from Rhizobium meliloti (strain 1021) (Ensifer meliloti).